We begin with the raw amino-acid sequence, 86 residues long: MANIKSQIKRNLTNEKRHQANVSFKSSYKTAVKAVEKAVEAKDKDLALAKLSFAHKKLDKGQAKGIFHKNFVARNKSALARLVNSL.

Residues 1–11 (MANIKSQIKRN) are compositionally biased toward polar residues. Positions 1–20 (MANIKSQIKRNLTNEKRHQA) are disordered.

The protein belongs to the bacterial ribosomal protein bS20 family.

Binds directly to 16S ribosomal RNA. The protein is Small ribosomal subunit protein bS20 of Acholeplasma laidlawii (strain PG-8A).